A 191-amino-acid polypeptide reads, in one-letter code: MEKYIILILSYVIGSIPFSLIIAKINGINLREVGSGNIGATNVARTGNKRLAVLALFLDSLKGFVAVYTAQQFCDNNDLYIYVSAILAVLGHMFPIWLRFNGGKGVATTLGVLIALNISIALAFVFVWLIVFFIFRYSSLASLAATAAAVIASFFFQKELFLILLTVAILIFLKHYKNIANLLQGRERKFL.

The next 5 helical transmembrane spans lie at 5–25 (IILI…IAKI), 51–71 (LAVL…YTAQ), 78–98 (DLYI…PIWL), 114–134 (IALN…VFFI), and 153–173 (SFFF…LIFL).

This sequence belongs to the PlsY family. In terms of assembly, probably interacts with PlsX.

The protein localises to the cell membrane. It catalyses the reaction an acyl phosphate + sn-glycerol 3-phosphate = a 1-acyl-sn-glycero-3-phosphate + phosphate. It participates in lipid metabolism; phospholipid metabolism. In terms of biological role, catalyzes the transfer of an acyl group from acyl-phosphate (acyl-PO(4)) to glycerol-3-phosphate (G3P) to form lysophosphatidic acid (LPA). This enzyme utilizes acyl-phosphate as fatty acyl donor, but not acyl-CoA or acyl-ACP. This chain is Glycerol-3-phosphate acyltransferase, found in Wolbachia pipientis subsp. Culex pipiens (strain wPip).